Reading from the N-terminus, the 999-residue chain is Helicase required for RNAi-mediated heterochromatin assembly 1 (999 aa).

The tract at residues 61-90 is disordered; it reads EQIETSETSKTQDSEGNKVDKNLKENKSIR. The segment covering 70 to 88 has biased composition (basic and acidic residues); sequence KTQDSEGNKVDKNLKENKS. S94 is modified (phosphoserine). The span at 106–124 shows a compositional bias: basic and acidic residues; it reads RNDITSGKNREFENEHHPA. The interval 106 to 131 is disordered; sequence RNDITSGKNREFENEHHPASDTSSWR. 393–400 contributes to the ATP binding site; sequence GPPGTGKS.

Cid12, hrr1 and rdp1 interact forming the RNA-directed RNA polymerase complex (RDRC). The RDRC complex interacts with the RITS complex via interaction between ago1 and hrr1. Clr4 has a role in mediating this interaction.

It is found in the cytoplasm. It localises to the nucleus. The enzyme catalyses ATP + H2O = ADP + phosphate + H(+). Its function is as follows. Has a role in the RNA interference (RNAi) pathway which is important for heterochromatin formation and accurate chromosome segregation. A member of the RNA-directed RNA polymerase complex (RDRC) which is involved in the generation of small interfering RNAs (siRNAs) and mediate their association with the RNA-induced transcriptional silencing (RITS) complex. RITS acts as a priming complex for dsRNA synthesis at the site of non-coding centromeric RNA. The polypeptide is Helicase required for RNAi-mediated heterochromatin assembly 1 (hrr1) (Schizosaccharomyces pombe (strain 972 / ATCC 24843) (Fission yeast)).